A 449-amino-acid polypeptide reads, in one-letter code: Putative recombination initiation defects 3 (449 aa).

The segment at 21–56 is disordered; it reads LRRSAEPQASQQLRSQQSQQSFSQGPSSSQRGCGGF. Residues 28–50 show a composition bias toward low complexity; sequence QASQQLRSQQSQQSFSQGPSSSQ. A Nuclear localization signal motif is present at residues 437–441; sequence RTKRK.

As to quaternary structure, interacts with PRD1; this interaction facilitates a binding to DFO.

It is found in the nucleus. Involved in DNA cleavage that forms the double-strand breaks (DSB) that initiate meiotic recombination. The sequence is that of Putative recombination initiation defects 3 from Arabidopsis thaliana (Mouse-ear cress).